The chain runs to 1514 residues: Neurexin-1 (1514 aa).

The N-terminal stretch at Met1–Gly30 is a signal peptide. The Laminin G-like 1 domain maps to Leu31–Cys217. At Leu31–Thr1438 the chain is on the extracellular side. N-linked (GlcNAc...) asparagine glycans are attached at residues Asn125 and Asn190. Residues Val197–Glu221 form a disordered region. Residues Ala219 to Ser256 form the EGF-like 1 domain. Cystine bridges form between Cys228-Cys243 and Cys245-Cys255. Laminin G-like domains follow at residues Ile283–Cys480 and Asp487–Cys679. Ca(2+) contacts are provided by Asp329, Leu346, and Met414. 5 cysteine pairs are disulfide-bonded: Cys444/Cys480, Cys650/Cys679, Cys687/Cys698, Cys692/Cys707, and Cys709/Cys719. Residues Thr683 to Glu720 enclose the EGF-like 2 domain. Laminin G-like domains follow at residues Val725–Cys898 and Asp912–Cys1087. Positions 772 and 789 each coordinate Ca(2+). Asn797 carries N-linked (GlcNAc...) asparagine glycosylation. A Ca(2+)-binding site is contributed by Arg848. Cystine bridges form between Cys890–Cys898, Cys1059–Cys1087, Cys1094–Cys1105, Cys1099–Cys1114, and Cys1116–Cys1126. The EGF-like 3 domain maps to Pro1090–Asn1127. The 199-residue stretch at Tyr1133–Val1331 folds into the Laminin G-like 6 domain. Asp1183 and Val1200 together coordinate Ca(2+). Asn1230 is a glycosylation site (N-linked (GlcNAc...) asparagine). Positions 1282 and 1284 each coordinate Ca(2+). Residue Ser1392 is glycosylated (O-linked (Xyl...) (heparan sulfate) serine). The tract at residues Pro1396–Ser1427 is disordered. A helical membrane pass occupies residues Gly1439–Met1459. The Cytoplasmic portion of the chain corresponds to Tyr1460–Val1514. The segment at Asn1481–Asn1507 is interaction with CASK. The segment at Asn1481–Val1514 is disordered.

The protein belongs to the neurexin family. As to quaternary structure, interacts (via laminin G-like domain 2 and/or laminin G-like domain 6) with NLGN1 forming a heterotetramer, where one NLGN1 dimer interacts with one NRXN1 dimer. Also interacts (via laminin G-like domain 2 and/or laminin G-like domain 6) with NLGN2, NLGN3 and NLGN4L; interactions with NLGN1, NLGN2, NLGN3 and NLGN4L are calcium-dependent. Interacts (via cytoplasmic C-terminal region) with CASK (via the PDZ, SH3 and guanylate kinase-like domains). Interacts (via cytoplasmic C-terminus) with CASKIN1 and APBA1. Interacts (via laminin G-like domain 2) with NXPH1 and NXPH3. Alpha-type isoforms (neurexin-1-alpha) interact (via laminin G-like domain 2 and/or laminin G-like domain 6) with DAG1 (via alpha-dystroglycan chain). Interacts with LRRTM1, LRRTM2, LRRTM3 and LRRTM4. Interacts with SYT13 and SYTL1. Interacts with CBLN1, CBLN2 and, less avidly, with CBLN4. Interacts with CLSTN3. In terms of processing, O-glycosylated; contains heparan sulfate. Heparan sulfate attachment is required for synapse development by mediating interactions with neuroligins and LRRTM2.

It is found in the presynaptic cell membrane. Functionally, cell surface protein involved in cell-cell-interactions, exocytosis of secretory granules and regulation of signal transmission. Function is isoform-specific. Alpha-type isoforms have a long N-terminus with six laminin G-like domains and play an important role in synaptic signal transmission. Alpha-type isoforms play a role in the regulation of calcium channel activity and Ca(2+)-triggered neurotransmitter release at synapses and at neuromuscular junctions. They play an important role in Ca(2+)-triggered exocytosis of secretory granules in pituitary gland. They may affect their functions at synapses and in endocrine cells via their interactions with proteins from the exocytotic machinery. Likewise, alpha-type isoforms play a role in regulating the activity of postsynaptic NMDA receptors, a subtype of glutamate-gated ion channels. Both alpha-type and beta-type isoforms may play a role in the formation or maintenance of synaptic junctions via their interactions (via the extracellular domains) with neuroligin family members, CBLN1 or CBLN2. In vitro, triggers the de novo formation of presynaptic structures. May be involved in specification of excitatory synapses. Alpha-type isoforms were first identified as receptors for alpha-latrotoxin from spider venom. The sequence is that of Neurexin-1 (Nrxn1) from Mus musculus (Mouse).